Consider the following 486-residue polypeptide: ATP-dependent rRNA helicase rrp3 (486 aa).

Residues 1 to 60 (MSSVKRRKTDKNPSLEGLKSKKTKESKKESHTPSPEPIEDTEDNRVIEETEEAEEDDAPK) are disordered. Positions 60–88 (KSFKDLGIVDSLCEACDTLGYKAPTPIQR) match the Q motif motif. The 172-residue stretch at 91–262 (IPLALQGRDL…RASLKDPLRV (172 aa)) folds into the Helicase ATP-binding domain. 104-111 (AETGSGKT) serves as a coordination point for ATP. Residues 210 to 213 (DEAD) carry the DEAD box motif. The region spanning 286–434 (HKDTYLIYLL…EYPTVKDEVM (149 aa)) is the Helicase C-terminal domain. Composition is skewed to basic and acidic residues over residues 447 to 460 (ARNE…DRGK) and 476 to 486 (RGRDEMDREEG). Residues 447–486 (ARNEMKNLHEDRGKKGAVLKGRRPANGAKRGRDEMDREEG) are disordered.

This sequence belongs to the DEAD box helicase family. DDX47/RRP3 subfamily. In terms of assembly, interacts with the SSU processome.

It is found in the nucleus. The enzyme catalyses ATP + H2O = ADP + phosphate + H(+). ATP-dependent rRNA helicase required for pre-ribosomal RNA processing. Involved in the maturation of the 35S-pre-rRNA and to its cleavage to mature 18S rRNA. This chain is ATP-dependent rRNA helicase rrp3, found in Botryotinia fuckeliana (strain B05.10) (Noble rot fungus).